The following is a 130-amino-acid chain: S-adenosylmethionine decarboxylase proenzyme (130 aa).

Ser-63 serves as the catalytic Schiff-base intermediate with substrate; via pyruvic acid. Pyruvic acid (Ser); by autocatalysis is present on Ser-63. The active-site Proton acceptor; for processing activity is the His-68. The Proton donor; for catalytic activity role is filled by Cys-83.

It belongs to the prokaryotic AdoMetDC family. Type 1 subfamily. As to quaternary structure, heterotetramer of two alpha and two beta chains arranged as a dimer of alpha/beta heterodimers. Requires pyruvate as cofactor. Is synthesized initially as an inactive proenzyme. Formation of the active enzyme involves a self-maturation process in which the active site pyruvoyl group is generated from an internal serine residue via an autocatalytic post-translational modification. Two non-identical subunits are generated from the proenzyme in this reaction, and the pyruvate is formed at the N-terminus of the alpha chain, which is derived from the carboxyl end of the proenzyme. The post-translation cleavage follows an unusual pathway, termed non-hydrolytic serinolysis, in which the side chain hydroxyl group of the serine supplies its oxygen atom to form the C-terminus of the beta chain, while the remainder of the serine residue undergoes an oxidative deamination to produce ammonia and the pyruvoyl group blocking the N-terminus of the alpha chain.

The enzyme catalyses S-adenosyl-L-methionine + H(+) = S-adenosyl 3-(methylsulfanyl)propylamine + CO2. Its pathway is amine and polyamine biosynthesis; S-adenosylmethioninamine biosynthesis; S-adenosylmethioninamine from S-adenosyl-L-methionine: step 1/1. In terms of biological role, catalyzes the decarboxylation of S-adenosylmethionine to S-adenosylmethioninamine (dcAdoMet), the propylamine donor required for the synthesis of the polyamines spermine and spermidine from the diamine putrescine. The polypeptide is S-adenosylmethionine decarboxylase proenzyme (Thermotoga petrophila (strain ATCC BAA-488 / DSM 13995 / JCM 10881 / RKU-1)).